The following is a 1467-amino-acid chain: Neuropathy target esterase sws (1467 aa).

Residues 1–34 are Lumenal-facing; sequence MDVLEMLRASASGSYNTIFSDAWCQYVSKQITAT. Residues 35–55 form a helical membrane-spanning segment; sequence MYMYCAFGLMGVLFLAWFMYF. Residues 56–1467 lie on the Cytoplasmic side of the membrane; the sequence is KRLARLRLRD…RSSTYNETKN (1412 aa). Residue 174-301 coordinates a nucleoside 3',5'-cyclic phosphate; that stretch reads IFGHFEKPIF…IRVIQVIMIR (128 aa). 2 disordered regions span residues 332-353 and 372-416; these read TMSG…ANGP and MGMG…SVHG. Residues 339 to 350 show a composition bias toward low complexity; sequence SQTSQSSRQATA. Residues Ser-450 and Ser-459 each carry the phosphoserine modification. A nucleoside 3',5'-cyclic phosphate-binding positions include 488–615 and 604–731; these read ELGL…VVRR and IVLD…LSHR. The PNPLA domain maps to 958-1124; sequence LVLGGGGARG…VNNLPGHLWR (167 aa). The GXGXXG motif lies at 962–967; the sequence is GGGARG. Residues 989–993 carry the GXSXG motif; sequence GVSIG. Ser-991 acts as the Nucleophile in catalysis. Catalysis depends on Asp-1111, which acts as the Proton acceptor. Positions 1111 to 1113 match the DGA/G motif; that stretch reads DGG. Ser-1205 is modified (phosphoserine). The disordered stretch occupies residues 1377–1467; the sequence is RKMDKSTQST…RSSTYNETKN (91 aa). The span at 1382-1393 shows a compositional bias: polar residues; it reads STQSTPPTSSRA. 2 stretches are compositionally biased toward basic and acidic residues: residues 1396 to 1406 and 1448 to 1458; these read RGKEEARHMDN and LADKDEDKENR.

Belongs to the NTE family. As to quaternary structure, interacts with Pka-C3; interaction inhibits the catalytic function of Pka-C3 and the esterase activity of sws.

Its subcellular location is the endoplasmic reticulum membrane. The catalysed reaction is a 1-acyl-sn-glycero-3-phosphocholine + H2O = sn-glycerol 3-phosphocholine + a fatty acid + H(+). Its function is as follows. Phospholipase B that deacylates intracellular phosphatidylcholine (PtdCho), generating glycerophosphocholine (GroPtdCho). This deacylation occurs at both sn-2 and sn-1 positions of PtdCho. Its specific chemical modification by certain organophosphorus (OP) compounds leads to distal axonopathy. Plays a role in the signaling mechanism between neurons and glia that regulates glia wrapping during development of the adult brain. Essential for membrane lipid homeostasis and cell survival in both neurons and glia of the adult brain. The protein is Neuropathy target esterase sws of Drosophila yakuba (Fruit fly).